The following is an 88-amino-acid chain: Small ribosomal subunit protein uS15 (88 aa).

Belongs to the universal ribosomal protein uS15 family. In terms of assembly, part of the 30S ribosomal subunit. Forms a bridge to the 50S subunit in the 70S ribosome, contacting the 23S rRNA.

One of the primary rRNA binding proteins, it binds directly to 16S rRNA where it helps nucleate assembly of the platform of the 30S subunit by binding and bridging several RNA helices of the 16S rRNA. In terms of biological role, forms an intersubunit bridge (bridge B4) with the 23S rRNA of the 50S subunit in the ribosome. The sequence is that of Small ribosomal subunit protein uS15 from Borrelia turicatae (strain 91E135).